We begin with the raw amino-acid sequence, 430 residues long: Adenylosuccinate synthetase (430 aa).

GTP contacts are provided by residues 12-18 (GDEGKGK) and 40-42 (GHT). Catalysis depends on D13, which acts as the Proton acceptor. Mg(2+) is bound by residues D13 and G40. IMP is bound by residues 13 to 16 (DEGK), 38 to 41 (NAGH), T128, R142, Q223, T238, and R302. Residue H41 is the Proton donor of the active site. Substrate is bound at residue 298–304 (TTTGRPR). GTP contacts are provided by residues R304, 330 to 332 (SID), and 412 to 414 (SVG).

Belongs to the adenylosuccinate synthetase family. Homodimer. Requires Mg(2+) as cofactor.

The protein resides in the cytoplasm. It catalyses the reaction IMP + L-aspartate + GTP = N(6)-(1,2-dicarboxyethyl)-AMP + GDP + phosphate + 2 H(+). Its pathway is purine metabolism; AMP biosynthesis via de novo pathway; AMP from IMP: step 1/2. Functionally, plays an important role in the de novo pathway of purine nucleotide biosynthesis. Catalyzes the first committed step in the biosynthesis of AMP from IMP. This is Adenylosuccinate synthetase from Streptococcus suis (strain 98HAH33).